The following is a 287-amino-acid chain: MSYNVRVAIIGGTGLYSLEGMELIEEIFPDTPWGKPSDKIKIGKYKGKLIAFLPRHGIGHFLSPPEVPNHANICALKQLGVEEIVAFSSVGSLREEIKPLDFVLPSQIIDRTRFRNSTYFGNGVVAHAPFAEPFSPNLSKRIAQTAKKIGLEIHLDKTLVCMEGPLFSTKAESHLYRSWGADIINMTVLPEAKLAREAEIAYQMICMSTDYDCWREGEESVTVEMVIANLTKNAETAKKLLSELIHVLGNGDDLSLKNSTRYSIITAPEKRNPETVKKLRVLFPEYF.

Residues threonine 13 and 55–56 contribute to the phosphate site; that span reads RH. Methionine 186 provides a ligand contact to substrate. Threonine 187 contacts phosphate. 210-212 provides a ligand contact to substrate; it reads DYD.

Belongs to the PNP/MTAP phosphorylase family. MTAP subfamily. Homohexamer. Dimer of a homotrimer.

The catalysed reaction is S-methyl-5'-thioadenosine + phosphate = 5-(methylsulfanyl)-alpha-D-ribose 1-phosphate + adenine. It functions in the pathway amino-acid biosynthesis; L-methionine biosynthesis via salvage pathway; S-methyl-5-thio-alpha-D-ribose 1-phosphate from S-methyl-5'-thioadenosine (phosphorylase route): step 1/1. Its function is as follows. Catalyzes the reversible phosphorylation of S-methyl-5'-thioadenosine (MTA) to adenine and 5-methylthioribose-1-phosphate. Involved in the breakdown of MTA, a major by-product of polyamine biosynthesis. Responsible for the first step in the methionine salvage pathway after MTA has been generated from S-adenosylmethionine. Has broad substrate specificity with 6-aminopurine nucleosides as preferred substrates. This chain is S-methyl-5'-thioadenosine phosphorylase, found in Leptospira interrogans serogroup Icterohaemorrhagiae serovar copenhageni (strain Fiocruz L1-130).